The sequence spans 140 residues: Ribosome maturation factor RimP (140 aa).

This sequence belongs to the RimP family.

It localises to the cytoplasm. Functionally, required for maturation of 30S ribosomal subunits. The sequence is that of Ribosome maturation factor RimP from Campylobacter hominis (strain ATCC BAA-381 / DSM 21671 / CCUG 45161 / LMG 19568 / NCTC 13146 / CH001A).